The sequence spans 87 residues: Phosphocarrier protein HPr (87 aa).

The region spanning 1–87 (MAEKTFTITA…EEVIKEGLGE (87 aa)) is the HPr domain. Histidine 15 functions as the Pros-phosphohistidine intermediate in the catalytic mechanism. Serine 46 bears the Phosphoserine; by HPrK/P mark.

This sequence belongs to the HPr family.

It localises to the cytoplasm. Phosphorylation on Ser-46 inhibits the phosphoryl transfer from enzyme I to HPr. General (non sugar-specific) component of the phosphoenolpyruvate-dependent sugar phosphotransferase system (sugar PTS). This major carbohydrate active-transport system catalyzes the phosphorylation of incoming sugar substrates concomitantly with their translocation across the cell membrane. The phosphoryl group from phosphoenolpyruvate (PEP) is transferred to the phosphoryl carrier protein HPr by enzyme I. Phospho-HPr then transfers it to the PTS EIIA domain. Functionally, P-Ser-HPr interacts with the catabolite control protein A (CcpA), forming a complex that binds to DNA at the catabolite response elements cre, operator sites preceding a large number of catabolite-regulated genes. Thus, P-Ser-HPr is a corepressor in carbon catabolite repression (CCR), a mechanism that allows bacteria to coordinate and optimize the utilization of available carbon sources. P-Ser-HPr also plays a role in inducer exclusion, in which it probably interacts with several non-PTS permeases and inhibits their transport activity. The polypeptide is Phosphocarrier protein HPr (ptsH) (Halalkalibacterium halodurans (strain ATCC BAA-125 / DSM 18197 / FERM 7344 / JCM 9153 / C-125) (Bacillus halodurans)).